A 200-amino-acid chain; its full sequence is Cysteine dioxygenase type 1 (200 aa).

Residues His86, His88, and His140 each coordinate Fe cation. The segment at residues 93–157 is a cross-link (3'-(S-cysteinyl)-tyrosine (Cys-Tyr)); the sequence is CFLKMLQGNL…TEPAVSLHLY (65 aa).

Belongs to the cysteine dioxygenase family. In terms of assembly, monomer. It depends on Fe(2+) as a cofactor. Requires Ni(2+) as cofactor. Zn(2+) is required as a cofactor. The thioether cross-link between Cys-93 and Tyr-157 plays a structural role through stabilizing the Fe(2+) ion, and prevents the production of highly damaging free hydroxyl radicals by holding the oxygen radical via hydroxyl hydrogen. Highly expressed in liver and placenta. Low expression in heart, brain and pancreas. Also detected in hepatoblastoma Hep-G2 cells.

It catalyses the reaction L-cysteine + O2 = 3-sulfino-L-alanine + H(+). Its pathway is organosulfur biosynthesis; taurine biosynthesis; hypotaurine from L-cysteine: step 1/2. Its function is as follows. Catalyzes the oxidation of cysteine to cysteine sulfinic acid with addition of molecular dioxygen. This is Cysteine dioxygenase type 1 (CDO1) from Homo sapiens (Human).